A 425-amino-acid chain; its full sequence is MDLRYQTGFGSYFETEAHPGALPVGRNSPQKVPFGLYAEQLSGSAFTAPRHENRRTWLYRLRPSAGHEAYQPYAQDKLVSAFPGPATPNRLRWSPLEIPAAPTDFVDGLVSLAGNADAATLGGIAAHVYLVNVSMKNRVFYNADGEMLIVPQMGELTLVTEMGVLKAGPGHIAVIPRGVRFRVEVEGPARGYVCENYGAAFRLPELGPIGANGLANPRDFEAPVAAFEDIDTPTQVIQKFQGALWAATWDHSPLDVVAWHGNLTPYRYDLSRFNTINTVSYDHPDPSIFTVLTSPSDTPGTANCDFVIFPPRWMVAEDTFRPPWFHRNVMSEFMGLIHGAYDAKAGGFVPGGASLHNCMSDHGPDVASHKKATEVVLAPHKIDGTMAFMFESRWVFRPTHLALESAALQSDYDACWTGFPKARLS.

H283 acts as the Proton acceptor in catalysis. 2 residues coordinate Fe cation: H326 and E332. Residues Y341 and H362 each contribute to the homogentisate site. H362 contributes to the Fe cation binding site.

The protein belongs to the homogentisate dioxygenase family. Hexamer; dimer of trimers. Fe cation serves as cofactor.

The enzyme catalyses homogentisate + O2 = 4-maleylacetoacetate + H(+). The protein operates within amino-acid degradation; L-phenylalanine degradation; acetoacetate and fumarate from L-phenylalanine: step 4/6. Its function is as follows. Involved in the catabolism of homogentisate (2,5-dihydroxyphenylacetate or 2,5-OH-PhAc), a central intermediate in the degradation of phenylalanine and tyrosine. Catalyzes the oxidative ring cleavage of the aromatic ring of homogentisate to yield maleylacetoacetate. The polypeptide is Homogentisate 1,2-dioxygenase (Caulobacter vibrioides (strain ATCC 19089 / CIP 103742 / CB 15) (Caulobacter crescentus)).